The following is a 322-amino-acid chain: Cytochrome c biogenesis protein CcsA (322 aa).

7 helical membrane passes run 9 to 29 (ILTH…LITL), 44 to 64 (GMIV…VSSG), 68 to 88 (LSNL…LHTI), 143 to 163 (MLLS…ILII), 226 to 246 (IISL…VWAN), 260 to 274 (TWAF…IYLH), and 289 to 309 (IASI…LLGI).

This sequence belongs to the CcmF/CycK/Ccl1/NrfE/CcsA family. In terms of assembly, may interact with Ccs1.

It is found in the plastid. It localises to the chloroplast thylakoid membrane. Functionally, required during biogenesis of c-type cytochromes (cytochrome c6 and cytochrome f) at the step of heme attachment. The polypeptide is Cytochrome c biogenesis protein CcsA (Hordeum vulgare (Barley)).